Reading from the N-terminus, the 604-residue chain is MADPKGSTSKEGFNDWCILEAECSDIDNDLEQLFDQDTDSDISDLLDENDVEQGNSRELFHLQECQESEEQLQKLKRKYLSPKAVAQLSPRFESISLSPQQKSKRRLFAEQDSGLELTLTNEAEDVSPEVEVPALNSQPVAEGQSGDIDISYTALLRASNNKAILMAKFKEAFGVGFNDLTRQFKSYKTCCNAWVISVYAVHDDLIESSKQLLQQHCDYVWIRGIGAMSLFLVCFKAGKNRGTVHKLMTTMLNVHEKQILSEPPKLRNVAAALFWYKGSMGSGVFTYGSYPDWIAHQTILGHQSAEASTFDLSDMVQWAFDNNYLDEADIAYQYAKLAPDNSNAVAWLAHNNQAKFVRECASMVRFYKKGQMKEMSMSEWIYTKIHEVEGEGQWSTIVQFLRYQQVNFIMFLAALKDLLHSVPKRNCILFYGPPNTGKSAFTMSLIKVLKGRVLSFCNSKSQFWLQPLSECKIALLDDVTDPCWVYMDTYLRNGLDGHYVSLDCKHKAPMQTKFPALLLTSNINVHNEVNYRYLHSRIKGFEFPNPFPMKADNTPQFDLTDQSWKSFFTRLWHQLDLSDQEDEGENGESQRAFQCSTRSANEHL.

The Nuclear localization signal signature appears at 76 to 78; the sequence is KRK. Phosphoserine; by host is present on residues S81 and S89. Positions 144–307 are DNA-binding region; sequence QSGDIDISYT…TILGHQSAEA (164 aa). Positions 406 to 556 constitute an SF3 helicase domain; it reads VNFIMFLAAL…FPMKADNTPQ (151 aa). 432–439 serves as a coordination point for ATP; it reads GPPNTGKS. Residue K513 forms a Glycyl lysine isopeptide (Lys-Gly) (interchain with G-Cter in SUMO) linkage. A disordered region spans residues 579-604; the sequence is DQEDEGENGESQRAFQCSTRSANEHL. A compositionally biased stretch (polar residues) spans 587 to 604; that stretch reads GESQRAFQCSTRSANEHL.

This sequence belongs to the papillomaviridae E1 protein family. As to quaternary structure, can form hexamers. Interacts with E2 protein; this interaction increases E1 DNA binding specificity. Interacts with host DNA polymerase subunit POLA2. Interacts with host single stranded DNA-binding protein RPA1. Interacts with host TOP1; this interaction stimulates the enzymatic activity of TOP1. In terms of processing, phosphorylated. Sumoylated.

It is found in the host nucleus. It carries out the reaction Couples ATP hydrolysis with the unwinding of duplex DNA by translocating in the 3'-5' direction.. The enzyme catalyses ATP + H2O = ADP + phosphate + H(+). Its function is as follows. ATP-dependent DNA 3'-5' helicase required for initiation of viral DNA replication. It forms a complex with the viral E2 protein. The E1-E2 complex binds to the replication origin which contains binding sites for both proteins. During the initial step, a dimer of E1 interacts with a dimer of protein E2 leading to a complex that binds the viral origin of replication with high specificity. Then, a second dimer of E1 displaces the E2 dimer in an ATP-dependent manner to form the E1 tetramer. Following this, two E1 monomers are added to each half of the site, which results in the formation of two E1 trimers on the viral ori. Subsequently, two hexamers will be created. The double hexamer acts as a bi-directional helicase machinery and unwinds the viral DNA and then recruits the host DNA polymerase to start replication. This Human papillomavirus 25 protein is Replication protein E1.